A 302-amino-acid chain; its full sequence is uncharacterized protein (302 aa).

The next 9 membrane-spanning stretches (helical) occupy residues 1–21, 33–53, 67–87, 101–121, 124–144, 185–205, 220–240, 253–273, and 274–294; these read MSWIIFYTIIFALLVLDLGVI, SLLFSLFYFTISCLFGIYIYY, FLIEKAMSLDNIFVISIIFQF, FGIIGVIAFRAVMIYGGIILI, FSWLLYIFAVILIATGVKTFY, YVTPLFISLILIEAIDLVFAI, IIYTSNIFAILGLRALFFCLA, LALILIFIGIKIFIHHYIAIP, and AYISLTVTITLLLLGIFASVI.

The protein belongs to the TerC family.

It is found in the cell membrane. This is an uncharacterized protein from Rickettsia bellii (strain RML369-C).